The primary structure comprises 432 residues: 3-phosphoshikimate 1-carboxyvinyltransferase (432 aa).

3-phosphoshikimate contacts are provided by Lys-23, Ser-24, and Arg-28. Lys-23 serves as a coordination point for phosphoenolpyruvate. Phosphoenolpyruvate is bound by residues Gly-99 and Arg-127. 3-phosphoshikimate contacts are provided by Ser-172, Ser-173, Gln-174, Ser-200, Asp-317, Asn-341, and Lys-345. Gln-174 contributes to the phosphoenolpyruvate binding site. Asp-317 serves as the catalytic Proton acceptor. Residues Arg-349, Arg-391, and Lys-416 each contribute to the phosphoenolpyruvate site.

Belongs to the EPSP synthase family. In terms of assembly, monomer.

The protein resides in the cytoplasm. It carries out the reaction 3-phosphoshikimate + phosphoenolpyruvate = 5-O-(1-carboxyvinyl)-3-phosphoshikimate + phosphate. It functions in the pathway metabolic intermediate biosynthesis; chorismate biosynthesis; chorismate from D-erythrose 4-phosphate and phosphoenolpyruvate: step 6/7. Functionally, catalyzes the transfer of the enolpyruvyl moiety of phosphoenolpyruvate (PEP) to the 5-hydroxyl of shikimate-3-phosphate (S3P) to produce enolpyruvyl shikimate-3-phosphate and inorganic phosphate. The polypeptide is 3-phosphoshikimate 1-carboxyvinyltransferase (Blochmanniella pennsylvanica (strain BPEN)).